We begin with the raw amino-acid sequence, 100 residues long: Large ribosomal subunit protein uL23 (100 aa).

The protein belongs to the universal ribosomal protein uL23 family. Part of the 50S ribosomal subunit. Contacts protein L29, and trigger factor when it is bound to the ribosome.

Functionally, one of the early assembly proteins it binds 23S rRNA. One of the proteins that surrounds the polypeptide exit tunnel on the outside of the ribosome. Forms the main docking site for trigger factor binding to the ribosome. This is Large ribosomal subunit protein uL23 from Synechococcus sp. (strain CC9311).